The following is a 286-amino-acid chain: tRNA (guanine-N(7)-)-methyltransferase (286 aa).

S-adenosyl-L-methionine is bound by residues Gly103, 126-127, 161-162, and Cys181; these read EI and NA. Asp184 is an active-site residue. 259 to 261 lines the S-adenosyl-L-methionine pocket; that stretch reads TEE.

The protein belongs to the class I-like SAM-binding methyltransferase superfamily. TrmB family. As to quaternary structure, forms a complex with TRM82.

Its subcellular location is the nucleus. It carries out the reaction guanosine(46) in tRNA + S-adenosyl-L-methionine = N(7)-methylguanosine(46) in tRNA + S-adenosyl-L-homocysteine. It functions in the pathway tRNA modification; N(7)-methylguanine-tRNA biosynthesis. Its function is as follows. Catalyzes the formation of N(7)-methylguanine at position 46 (m7G46) in tRNA. This Vanderwaltozyma polyspora (strain ATCC 22028 / DSM 70294 / BCRC 21397 / CBS 2163 / NBRC 10782 / NRRL Y-8283 / UCD 57-17) (Kluyveromyces polysporus) protein is tRNA (guanine-N(7)-)-methyltransferase.